The primary structure comprises 247 residues: Zinc finger protein YPR015C (247 aa).

C2H2-type zinc fingers lie at residues 185 to 207 (KQCP…YLIH) and 213 to 237 (FKCT…LRTH).

The protein is Zinc finger protein YPR015C of Saccharomyces cerevisiae (strain ATCC 204508 / S288c) (Baker's yeast).